A 381-amino-acid chain; its full sequence is Alpha-methylacyl-CoA racemase (381 aa).

Substrate-binding positions include R36 and 54-57 (LDLK). Residue K57 is modified to N6-acetyllysine. N6-acetyllysine; alternate is present on residues K86 and K100. 2 positions are modified to N6-succinyllysine; alternate: K86 and K100. K117 bears the N6-acetyllysine mark. 120–125 (GHDINY) serves as a coordination point for substrate. Residue H121 is the Proton acceptor of the active site. D151 serves as the catalytic Proton donor. K267 carries the N6-succinyllysine modification. Positions 316–344 (TDGEQLPSPRPAPLLSRTPAVPSAKRDPS) are disordered. The Microbody targeting signal signature appears at 379–381 (ANL).

The protein belongs to the CoA-transferase III family. As to quaternary structure, monomer.

Its subcellular location is the peroxisome. It localises to the mitochondrion. It carries out the reaction a (2S)-2-methylacyl-CoA = a (2R)-2-methylacyl-CoA. The enzyme catalyses (25R)-3alpha,7alpha,12alpha-trihydroxy-5beta-cholestan-26-oyl-CoA = (25S)-3alpha,7alpha,12alpha-trihydroxy-5beta-cholestan-26-oyl-CoA. The catalysed reaction is (2R,6)-dimethylheptanoyl-CoA = (2S,6)-dimethylheptanoyl-CoA. It functions in the pathway lipid metabolism; bile acid biosynthesis. The protein operates within lipid metabolism; fatty acid metabolism. Catalyzes the interconversion of (R)- and (S)-stereoisomers of alpha-methyl-branched-chain fatty acyl-CoA esters. Acts only on coenzyme A thioesters, not on free fatty acids, and accepts as substrates a wide range of alpha-methylacyl-CoAs, including pristanoyl-CoA, trihydroxycoprostanoyl-CoA (an intermediate in bile acid synthesis), and arylpropionic acids like the anti-inflammatory drug ibuprofen (2-(4-isobutylphenyl)propionic acid) but neither 3-methyl-branched nor linear-chain acyl-CoAs. The chain is Alpha-methylacyl-CoA racemase (Amacr) from Mus musculus (Mouse).